Here is a 1097-residue protein sequence, read N- to C-terminus: Transmembrane protein 132D (1097 aa).

The N-terminal stretch at 1-30 (MCPSEMGTLWYLWSPVLISLAALFSKVTEG) is a signal peptide. Residues 31-913 (RGILESIQRF…LDQAAKGLSD (883 aa)) are Extracellular-facing. Basic and acidic residues predominate over residues 233–245 (DERGDCAKEDSRK). Residues 233-263 (DERGDCAKEDSRKSGGTPAGHNDVDESSPPL) form a disordered region. A helical membrane pass occupies residues 914 to 934 (LEIGMYALLGVFCLAILVFLI). The Cytoplasmic segment spans residues 935–1097 (NCVTFALKYR…SCMERLHEHV (163 aa)). The segment at 1021–1042 (MLTDDQEQKSEPPTSPTSKRKR) is disordered.

It belongs to the TMEM132 family. As to expression, expressed in mature oligodendrocytes in the white and gray matter of the brain.

The protein localises to the membrane. Its function is as follows. Regulates neuronal morphology via inhibition of the WAVE regulatory complex (WCR), a complex that controls F-actin cytoskeletal dynamics. The chain is Transmembrane protein 132D (Tmem132d) from Mus musculus (Mouse).